The primary structure comprises 601 residues: Oligoendopeptidase F homolog (601 aa).

His-387 contacts Zn(2+). Glu-388 is an active-site residue. His-391 and His-394 together coordinate Zn(2+).

Belongs to the peptidase M3 family. It depends on Zn(2+) as a cofactor.

In terms of biological role, hydrolyzes peptides containing between 7 and 17 amino acids with a rather wide specificity. This Lactococcus lactis subsp. lactis (strain IL1403) (Streptococcus lactis) protein is Oligoendopeptidase F homolog (pepF).